Reading from the N-terminus, the 119-residue chain is Large ribosomal subunit protein bL20 (119 aa).

It belongs to the bacterial ribosomal protein bL20 family.

Functionally, binds directly to 23S ribosomal RNA and is necessary for the in vitro assembly process of the 50S ribosomal subunit. It is not involved in the protein synthesizing functions of that subunit. The protein is Large ribosomal subunit protein bL20 of Sorangium cellulosum (strain So ce56) (Polyangium cellulosum (strain So ce56)).